The sequence spans 236 residues: Probable calcium-binding protein CML30 (236 aa).

The interval 43-64 is disordered; that stretch reads VVVVAKKRPEEEPRRPDPDADL. Positions 49 to 60 are enriched in basic and acidic residues; sequence KRPEEEPRRPDP. 2 consecutive EF-hand domains span residues 59-94 and 96-131; these read DPDA…LGIA and SSAA…IPKR. Ca(2+) is bound by residues D72, D74, D76, E83, D109, N111, D113, and E120. The interval 130–158 is disordered; it reads KRRKSHQQHPLPSTAAADEEAAAADEEYE. Over residues 146-158 the composition is skewed to acidic residues; the sequence is ADEEAAAADEEYE. EF-hand domains lie at 161–196 and 202–236; these read EEER…LGLR and PAVA…VVKA. D174, N176, D178, E185, D215, D217, D219, M221, and E226 together coordinate Ca(2+).

Its function is as follows. Potential calcium sensor. The protein is Probable calcium-binding protein CML30 (CML30) of Oryza sativa subsp. japonica (Rice).